The sequence spans 38 residues: Photosystem II reaction center protein L (38 aa).

The chain crosses the membrane as a helical span at residues 17 to 37; sequence SLYWGLLLIFVLAILFSSYIF.

The protein belongs to the PsbL family. As to quaternary structure, PSII is composed of 1 copy each of membrane proteins PsbA, PsbB, PsbC, PsbD, PsbE, PsbF, PsbH, PsbI, PsbJ, PsbK, PsbL, PsbM, PsbT, PsbX, PsbY, PsbZ, Psb30/Ycf12, at least 3 peripheral proteins of the oxygen-evolving complex and a large number of cofactors. It forms dimeric complexes.

It localises to the plastid. It is found in the chloroplast thylakoid membrane. In terms of biological role, one of the components of the core complex of photosystem II (PSII). PSII is a light-driven water:plastoquinone oxidoreductase that uses light energy to abstract electrons from H(2)O, generating O(2) and a proton gradient subsequently used for ATP formation. It consists of a core antenna complex that captures photons, and an electron transfer chain that converts photonic excitation into a charge separation. This subunit is found at the monomer-monomer interface and is required for correct PSII assembly and/or dimerization. The chain is Photosystem II reaction center protein L from Nephroselmis olivacea (Green alga).